We begin with the raw amino-acid sequence, 475 residues long: Trifunctional enzyme subunit beta, mitochondrial (475 aa).

The N-terminal 34 residues, 1 to 34 (MTTILTYPFKNLPTASKWALRFSIRPLSCSSQLR), are a transit peptide targeting the mitochondrion. K73 carries the N6-acetyllysine; alternate modification. Position 73 is an N6-succinyllysine; alternate (K73). C139 (acyl-thioester intermediate) is an active-site residue. An intramembrane segment occupies 174–221 (IRHSRKMRKLMLDLNKAKSMGQRLSLISKFRFNFLAPELPAVSEFSTS). The residue at position 189 (K189) is an N6-acetyllysine; alternate. The residue at position 189 (K189) is an N6-succinyllysine; alternate. An N6-succinyllysine mark is found at K191, K273, and K292. The residue at position 294 (K294) is an N6-acetyllysine; alternate. Residue K294 is modified to N6-succinyllysine; alternate. K299 is modified (N6-acetyllysine). K333 is subject to N6-acetyllysine; alternate. K333 is modified (N6-succinyllysine; alternate). N6-acetyllysine occurs at positions 349 and 362. The Proton donor/acceptor role is filled by C459.

It belongs to the thiolase-like superfamily. Thiolase family. Heterotetramer of 2 alpha/HADHA and 2 beta/HADHB subunits; forms the mitochondrial trifunctional enzyme. Also purified as higher order heterooligomers including a 4 alpha/HADHA and 4 beta/HADHB heterooligomer which physiological significance remains unclear. The mitochondrial trifunctional enzyme interacts with MTLN. Interacts with RSAD2/viperin.

It is found in the mitochondrion. The protein localises to the mitochondrion inner membrane. It localises to the mitochondrion outer membrane. The protein resides in the endoplasmic reticulum. It carries out the reaction an acyl-CoA + acetyl-CoA = a 3-oxoacyl-CoA + CoA. It catalyses the reaction butanoyl-CoA + acetyl-CoA = 3-oxohexanoyl-CoA + CoA. The enzyme catalyses hexanoyl-CoA + acetyl-CoA = 3-oxooctanoyl-CoA + CoA. The catalysed reaction is octanoyl-CoA + acetyl-CoA = 3-oxodecanoyl-CoA + CoA. It carries out the reaction decanoyl-CoA + acetyl-CoA = 3-oxododecanoyl-CoA + CoA. It catalyses the reaction dodecanoyl-CoA + acetyl-CoA = 3-oxotetradecanoyl-CoA + CoA. The enzyme catalyses tetradecanoyl-CoA + acetyl-CoA = 3-oxohexadecanoyl-CoA + CoA. The protein operates within lipid metabolism; fatty acid beta-oxidation. Its function is as follows. Mitochondrial trifunctional enzyme catalyzes the last three of the four reactions of the mitochondrial beta-oxidation pathway. The mitochondrial beta-oxidation pathway is the major energy-producing process in tissues and is performed through four consecutive reactions breaking down fatty acids into acetyl-CoA. Among the enzymes involved in this pathway, the trifunctional enzyme exhibits specificity for long-chain fatty acids. Mitochondrial trifunctional enzyme is a heterotetrameric complex composed of two proteins, the trifunctional enzyme subunit alpha/HADHA carries the 2,3-enoyl-CoA hydratase and the 3-hydroxyacyl-CoA dehydrogenase activities, while the trifunctional enzyme subunit beta/HADHB described here bears the 3-ketoacyl-CoA thiolase activity. In Pan troglodytes (Chimpanzee), this protein is Trifunctional enzyme subunit beta, mitochondrial (HADHB).